The sequence spans 152 residues: NAD(P)H-quinone oxidoreductase subunit N (152 aa).

It belongs to the complex I NdhN subunit family. In terms of assembly, NDH-1 can be composed of about 15 different subunits; different subcomplexes with different compositions have been identified which probably have different functions.

The protein localises to the cellular thylakoid membrane. It catalyses the reaction a plastoquinone + NADH + (n+1) H(+)(in) = a plastoquinol + NAD(+) + n H(+)(out). The enzyme catalyses a plastoquinone + NADPH + (n+1) H(+)(in) = a plastoquinol + NADP(+) + n H(+)(out). Its function is as follows. NDH-1 shuttles electrons from an unknown electron donor, via FMN and iron-sulfur (Fe-S) centers, to quinones in the respiratory and/or the photosynthetic chain. The immediate electron acceptor for the enzyme in this species is believed to be plastoquinone. Couples the redox reaction to proton translocation, and thus conserves the redox energy in a proton gradient. Cyanobacterial NDH-1 also plays a role in inorganic carbon-concentration. The polypeptide is NAD(P)H-quinone oxidoreductase subunit N (Prochlorococcus marinus (strain SARG / CCMP1375 / SS120)).